Here is an 874-residue protein sequence, read N- to C-terminus: S-layer protein (874 aa).

Residues 1–30 form the signal peptide; it reads MAKTNSYKKVIAGTMTAAMVAGVVSPVAAA. SLH domains lie at 31–93, 94–151, and 152–214; these read GKSF…NAQP, SFKD…KVDG, and TLVT…ENSD.

It is found in the secreted. The protein localises to the cell wall. The protein resides in the S-layer. Its function is as follows. The S-layer is a paracrystalline mono-layered assembly of proteins which coat the surface of bacteria. The protein is S-layer protein of Bacillus licheniformis.